We begin with the raw amino-acid sequence, 275 residues long: Large ribosomal subunit protein uL2 (275 aa).

Disordered stretches follow at residues G222 to R243 and G256 to P275.

Belongs to the universal ribosomal protein uL2 family. Part of the 50S ribosomal subunit. Forms a bridge to the 30S subunit in the 70S ribosome.

In terms of biological role, one of the primary rRNA binding proteins. Required for association of the 30S and 50S subunits to form the 70S ribosome, for tRNA binding and peptide bond formation. It has been suggested to have peptidyltransferase activity; this is somewhat controversial. Makes several contacts with the 16S rRNA in the 70S ribosome. The protein is Large ribosomal subunit protein uL2 of Syntrophomonas wolfei subsp. wolfei (strain DSM 2245B / Goettingen).